We begin with the raw amino-acid sequence, 204 residues long: Serotype 3 fimbrial subunit (204 aa).

Positions 1 to 25 (MSKFSYPALRAALILAASPVLPALA) are cleaved as a signal peptide. Cysteines 41 and 84 form a disulfide.

Belongs to the fimbrial protein family.

It localises to the fimbrium. Functionally, bordetella pertussis is the causative agent of whooping cough. An essential step in the disease process is the attachment of the bacteria to the ciliated epithelium of the respiratory tract, enabling the organism to resist normal host-clearance mechanisms. It is unclear which bacterial cell surface component are responsible for adherence but the fimbriae of B.pertussis are prime candidates for being involved in this process. The chain is Serotype 3 fimbrial subunit (fim3) from Bordetella pertussis (strain Tohama I / ATCC BAA-589 / NCTC 13251).